The sequence spans 161 residues: AP-1 complex subunit sigma-1 (161 aa).

It belongs to the adaptor complexes small subunit family. Adaptor protein complex 1 (AP-1) is a heterotetramer composed of two large adaptins (gamma-type subunit and beta-type subunit), a medium adaptin (mu-type subunit) and a small adaptin (sigma-type subunit). Expressed in seedlings, roots, stems, leaves, flowers and siliques (developing fruits and seeds).

It localises to the golgi apparatus. It is found in the cytoplasmic vesicle. Its subcellular location is the clathrin-coated vesicle membrane. In terms of biological role, subunit of clathrin-associated adaptor protein complex 1 that plays a role in protein sorting at the trans-Golgi network and early endosomes (TGN/EE). The AP complexes mediate the recruitment of clathrin to membranes and the recognition of sorting signals within the cytosolic tails of transmembrane cargo molecules. The protein is AP-1 complex subunit sigma-1 (AAP19-1) of Arabidopsis thaliana (Mouse-ear cress).